We begin with the raw amino-acid sequence, 296 residues long: MQIRRKHPNPAVKVESLSYVVKVPEAQPQNILEEIVWHKEIEVDKLRERLPLLELRQKIANTAPPCDFLAALKQGKTQPALIAEVKKASPSKGVILEDFDPVAIARTYEQGGATCLSVLTDSKFFQGSYENLTLVRQAVSLPLLCKEFILYPYQIYYARSKGADAVLLIAAILSDQDLAYFVKIVKGLGMTALVEVHSLAEFDRVLAIEGIELIGINNRNLETFTVDLDNTRQLLEARGEQVREKGILIVSESGLHTATDLAKVKQAGANAVLIGESLVKLPDPALGIQKLFENLG.

This sequence belongs to the TrpC family.

The enzyme catalyses 1-(2-carboxyphenylamino)-1-deoxy-D-ribulose 5-phosphate + H(+) = (1S,2R)-1-C-(indol-3-yl)glycerol 3-phosphate + CO2 + H2O. Its pathway is amino-acid biosynthesis; L-tryptophan biosynthesis; L-tryptophan from chorismate: step 4/5. The chain is Indole-3-glycerol phosphate synthase from Microcystis aeruginosa (strain NIES-843 / IAM M-2473).